A 428-amino-acid polypeptide reads, in one-letter code: Ribosomal RNA small subunit methyltransferase B (428 aa).

Residues 253–259 (CAAPGGK), Asp-276, Asp-302, and Asp-321 contribute to the S-adenosyl-L-methionine site. The Nucleophile role is filled by Cys-374.

The protein belongs to the class I-like SAM-binding methyltransferase superfamily. RsmB/NOP family.

It is found in the cytoplasm. It carries out the reaction cytidine(967) in 16S rRNA + S-adenosyl-L-methionine = 5-methylcytidine(967) in 16S rRNA + S-adenosyl-L-homocysteine + H(+). Its function is as follows. Specifically methylates the cytosine at position 967 (m5C967) of 16S rRNA. The chain is Ribosomal RNA small subunit methyltransferase B from Enterobacter sp. (strain 638).